Reading from the N-terminus, the 1085-residue chain is MDTPENVLQMLEAHMQSYKGNDPLGEWERYIQWVEENFPENKEYLITLLEHLMKEFLDKKKYHNDPRFISYCLKFAEYNSDLHQFFEFLYNHGIGTLSSPLYIAWAGHLEAQGELQHASAVLQRGIQNQAEPREFLQQQYRLFQTRLTETHLPAQARTSEPLHNVQVLNQMITSKSNPGNNMACISKNQGSELSGVISSACDKESNMERRVITISKSEYSVHSSLASKVDVEQVVMYCKEKLIRGESEFSFEELRAQKYNQRRKHEQWVNEDRHYMKRKEANAFEEQLLKQKMDELHKKLHQVVETSHEDLPASQERSEVNPARMGPSVGSQQELRAPCLPVTYQQTPVNMEKNPREAPPVVPPLANAISAALVSPATSQSIAPPVPLKAQTVTDSMFAVASKDAGCVNKSTHEFKPQSGAEIKEGCETHKVANTSSFHTTPNTSLGMVQATPSKVQPSPTVHTKEALGFIMNMFQAPTLPDISDDKDEWQSLDQNEDAFEAQFQKNVRSSGAWGVNKIISSLSSAFHVFEDGNKENYGLPQPKNKPTGARTFGERSVSRLPSKPKEEVPHAEEFLDDSTVWGIRCNKTLAPSPKSPGDFTSAAQLASTPFHKLPVESVHILEDKENVVAKQCTQATLDSCEENMVVPSRDGKFSPIQEKSPKQALSSHMYSASLLRLSQPAAGGVLTCEAELGVEACRLTDTDAAIAEDPPDAIAGLQAEWMQMSSLGTVDAPNFIVGNPWDDKLIFKLLSGLSKPVSSYPNTFEWQCKLPAIKPKTEFQLGSKLVYVHHLLGEGAFAQVYEATQGDLNDAKNKQKFVLKVQKPANPWEFYIGTQLMERLKPSMQHMFMKFYSAHLFQNGSVLVGELYSYGTLLNAINLYKNTPEKVMPQGLVISFAMRMLYMIEQVHDCEIIHGDIKPDNFILGNGFLEQDDEDDLSAGLALIDLGQSIDMKLFPKGTIFTAKCETSGFQCVEMLSNKPWNYQIDYFGVAATVYCMLFGTYMKVKNEGGECKPEGLFRRLPHLDMWNEFFHVMLNIPDCHHLPSLDLLRQKLKKVFQQHYTNKIRALRNRLIVLLLECKRSRK.

Residues 1–146 are necessary for kinetochore localization; it reads MDTPENVLQM…QQQYRLFQTR (146 aa). A BUB1 N-terminal domain is found at 11–182; that stretch reads LEAHMQSYKG…TSKSNPGNNM (172 aa). The short motif at 58 to 65 is the Nuclear localization signal element; sequence DKKKYHND. The necessary for interaction with KNL1 stretch occupies residues 99–132; the sequence is SPLYIAWAGHLEAQGELQHASAVLQRGIQNQAEP. Positions 229–256 are necessary for interaction with BUB3; it reads VDVEQVVMYCKEKLIRGESEFSFEELRA. A disordered region spans residues 305–333; sequence ETSHEDLPASQERSEVNPARMGPSVGSQQ. Over residues 306-319 the composition is skewed to basic and acidic residues; it reads TSHEDLPASQERSE. Residues serine 307, serine 314, serine 331, and serine 375 each carry the phosphoserine modification. Residues 458–476 form an essential for loading of BUBR1, MAD1L1 and MAD2L1 to kinetochores region; sequence PSPTVHTKEALGFIMNMFQ. Serine 525 bears the Phosphoserine mark. Positions 535–537 match the KEN box 1 motif; it reads KEN. The disordered stretch occupies residues 538–570; the sequence is YGLPQPKNKPTGARTFGERSVSRLPSKPKEEVP. Over residues 553–570 the composition is skewed to basic and acidic residues; that stretch reads FGERSVSRLPSKPKEEVP. Phosphoserine occurs at positions 563, 593, and 596. The residue at position 609 (threonine 609) is a Phosphothreonine; by CDK1. Positions 625–627 match the KEN box 2 motif; it reads KEN. Residues serine 655, serine 661, serine 668, and serine 672 each carry the phosphoserine modification. Residues 787 to 1085 enclose the Protein kinase domain; sequence VYVHHLLGEG…LLLECKRSRK (299 aa). ATP contacts are provided by residues 793-801 and lysine 821; that span reads LGEGAFAQV. Catalysis depends on aspartate 917, which acts as the Proton acceptor.

It belongs to the protein kinase superfamily. Ser/Thr protein kinase family. BUB1 subfamily. As to quaternary structure, interacts with BUB3 and KNL1. Interacts (when phosphorylated) with PLK1. The BUB1-BUB3 complex interacts with MAD1L1. In terms of assembly, (Microbial infection) Interacts with SV40 Large T antigen; this interaction induces activation of a DNA damage response and promotes p53/TP53 stabilization and phosphorylation. (Microbial infection) Interacts with herpes virus 8 protein LANA1. Post-translationally, upon spindle-assembly checkpoint activation it is hyperphosphorylated and its kinase activity toward CDC20 is stimulated. Phosphorylation at Thr-609 is required for interaction with PLK1, phosphorylation at this site probably creates a binding site for the POLO-box domain of PLK1, thus enhancing the PLK1-BUB1 interaction. In terms of processing, ubiquitinated and degraded during mitotic exit by APC/C-Cdh1. In terms of tissue distribution, high expression in testis and thymus, less in colon, spleen, lung and small intestine. Expressed in fetal thymus, bone marrow, heart, liver, spleen and thymus. Expression is associated with cells/tissues with a high mitotic index.

Its subcellular location is the nucleus. The protein localises to the chromosome. It is found in the centromere. The protein resides in the kinetochore. It carries out the reaction L-seryl-[protein] + ATP = O-phospho-L-seryl-[protein] + ADP + H(+). The enzyme catalyses L-threonyl-[protein] + ATP = O-phospho-L-threonyl-[protein] + ADP + H(+). With respect to regulation, autophosphorylated when the cells enters mitosis. Functionally, serine/threonine-protein kinase that performs 2 crucial functions during mitosis: it is essential for spindle-assembly checkpoint signaling and for correct chromosome alignment. Has a key role in the assembly of checkpoint proteins at the kinetochore, being required for the subsequent localization of CENPF, BUB1B, CENPE and MAD2L1. Required for the kinetochore localization of PLK1. Required for centromeric enrichment of AUKRB in prometaphase. Plays an important role in defining SGO1 localization and thereby affects sister chromatid cohesion. Promotes the centromeric localization of TOP2A. Acts as a substrate for anaphase-promoting complex or cyclosome (APC/C) in complex with its activator CDH1 (APC/C-Cdh1). Necessary for ensuring proper chromosome segregation and binding to BUB3 is essential for this function. Can regulate chromosome segregation in a kinetochore-independent manner. Can phosphorylate BUB3. The BUB1-BUB3 complex plays a role in the inhibition of APC/C when spindle-assembly checkpoint is activated and inhibits the ubiquitin ligase activity of APC/C by phosphorylating its activator CDC20. This complex can also phosphorylate MAD1L1. Kinase activity is essential for inhibition of APC/CCDC20 and for chromosome alignment but does not play a major role in the spindle-assembly checkpoint activity. Mediates cell death in response to chromosome missegregation and acts to suppress spontaneous tumorigenesis. The protein is Mitotic checkpoint serine/threonine-protein kinase BUB1 (BUB1) of Homo sapiens (Human).